Consider the following 495-residue polypeptide: MTTSDVVRVRFCPSPTGTPHVGLIRTALFNWAYARHTGGTFVFRIEDTDSARDSEDSYLALLDALRWLGMDWDEGPEIGGPYGPYRQSQRLDIYTDVIERLLAAGEAYEAFSTAEEVEARHIAAGRNPKLGYDNYDRDLTEEQRAAFRAEGRRPVVRLRMPDTDLTWVDLVRGETTFPAGSVPDFALTRGNGEPLYPLVNPVDDALMKITHVLRGEDLLPSTPRQLALYGALIRIGVADTTPQFAHLPSVLGEGNKKLSKRDPQSNLFLHRDRGFIPEGLLNYLALLGWSIADDHDIFSLEEMVAAFDVADVNSSPARFDQKKADALNAEHIRLLDEAEFARRLGAYFATHGHRTGLDDAQFAEAARLVQTRIVVLGDAWELLKFLDDASFTLDEKSAAKELKAEAVPVLGAALEALRGVEAWDTAAIEEALKGALIDRLELKPRKAFGPVRVAATGSSVSPPLFESLELLGRDRSLARLQAGRDHAAAAAAPQG.

Positions 13–23 match the 'HIGH' region motif; sequence PSPTGTPHVGL. The 'KMSKS' region signature appears at 257–261; sequence KLSKR. Lys260 provides a ligand contact to ATP.

The protein belongs to the class-I aminoacyl-tRNA synthetase family. Glutamate--tRNA ligase type 1 subfamily. In terms of assembly, monomer.

The protein resides in the cytoplasm. The catalysed reaction is tRNA(Glu) + L-glutamate + ATP = L-glutamyl-tRNA(Glu) + AMP + diphosphate. Functionally, catalyzes the attachment of glutamate to tRNA(Glu) in a two-step reaction: glutamate is first activated by ATP to form Glu-AMP and then transferred to the acceptor end of tRNA(Glu). This chain is Glutamate--tRNA ligase, found in Mycolicibacterium vanbaalenii (strain DSM 7251 / JCM 13017 / BCRC 16820 / KCTC 9966 / NRRL B-24157 / PYR-1) (Mycobacterium vanbaalenii).